Reading from the N-terminus, the 369-residue chain is MKSGRFIGVMSGTSLDGVDVVLATIDEHRVAQLASLSWPIPVSLKQAVLDICQGQQLTLSQFGQLDTQLGRLFADAVNALLKEQNLQARDIVAIGCHGQTVWHEPTGVAPHTLQIGDNNQIVARTGITVVGDFRRRDIALGGQGAPLVPAFHHALLAHPTERRMVLNIGGIANLSLLIPGQPVGGYDTGPGNMLMDAWIWRQAGKPYDKDAEWARAGKVILPLLQNMLSDPYFSQPAPKSTGREYFNYGWLERHLRHFPGVDPRDVQATLAELTAVTISEQVLLSGGCERLMVCGGGSRNPLLMARLAALLPGTEVTTTDAVGISGDDMEALAFAWLAWRTLAGLPGNLPSVTGASQETVLGAIFPANL.

An ATP-binding site is contributed by 12 to 19 (GTSLDGVD).

The protein belongs to the anhydro-N-acetylmuramic acid kinase family.

It catalyses the reaction 1,6-anhydro-N-acetyl-beta-muramate + ATP + H2O = N-acetyl-D-muramate 6-phosphate + ADP + H(+). It participates in amino-sugar metabolism; 1,6-anhydro-N-acetylmuramate degradation. The protein operates within cell wall biogenesis; peptidoglycan recycling. Catalyzes the specific phosphorylation of 1,6-anhydro-N-acetylmuramic acid (anhMurNAc) with the simultaneous cleavage of the 1,6-anhydro ring, generating MurNAc-6-P. Is required for the utilization of anhMurNAc either imported from the medium or derived from its own cell wall murein, and thus plays a role in cell wall recycling. The polypeptide is Anhydro-N-acetylmuramic acid kinase (Escherichia coli (strain SMS-3-5 / SECEC)).